Reading from the N-terminus, the 255-residue chain is Sorbose reductase sou1 (255 aa).

Positions 21 and 95 each coordinate NADP(+). Catalysis depends on proton donor residues Ser148 and Tyr163. Positions 163, 167, 195, and 197 each coordinate NADP(+). Residue Lys167 is the Lowers pKa of active site Tyr of the active site.

Belongs to the short-chain dehydrogenases/reductases (SDR) family.

It catalyses the reaction D-sorbitol + NADP(+) = keto-L-sorbose + NADPH + H(+). In terms of biological role, catalyzes the NADP dependent reduction of L-sorbose to D-glucitol. The protein is Sorbose reductase sou1 (sou1) of Schizosaccharomyces pombe (strain 972 / ATCC 24843) (Fission yeast).